Here is a 674-residue protein sequence, read N- to C-terminus: Polyunsaturated fatty acid 5-lipoxygenase (674 aa).

The PLAT domain occupies 2 to 118 (PSYTVTVATG…EVVLRDGRAK (117 aa)). Ca(2+)-binding residues include glycine 17, threonine 18, aspartate 19, asparagine 44, aspartate 45, glutamate 47, aspartate 79, and aspartate 80. The 556-residue stretch at 119–674 (LARDDQIHIL…PDRIPNSVAI (556 aa)) folds into the Lipoxygenase domain. At serine 272 the chain carries Phosphoserine; by MAPKAPK2. Positions 368 and 373 each coordinate Fe cation. The residue at position 524 (serine 524) is a Phosphoserine; by PKA. Residues histidine 551, asparagine 555, and isoleucine 674 each contribute to the Fe cation site.

Belongs to the lipoxygenase family. As to quaternary structure, homodimer. Interacts with ALOX5AP and LTC4S. Interacts with COTL1, the interaction is required for stability and efficient catalytic activity. Interacts with PIK3R1; this interaction bridges ALOX5 with CD40 after CD40 ligation in B cells and leads to the production of reactive oxygen species (ROS). Interacts (via PLAT domain) with DICER1 (via Dicer dsRNA-binding fold domain); this interaction enhances arachidonate 5-lipoxygenase activity and modifies the miRNA precursor processing activity of DICER1. The cofactor is Fe cation. In terms of processing, serine phosphorylation by MAPKAPK2 is stimulated by arachidonic acid. Phosphorylation on Ser-524 by PKA has an inhibitory effect. Phosphorylation on Ser-272 prevents export from the nucleus. Phosphorylation at Ser-524 is stimulated by 8-bromo-3',5'-cyclic AMP or prostaglandin E2.

Its subcellular location is the cytoplasm. It is found in the nucleus matrix. It localises to the nucleus membrane. The protein localises to the perinuclear region. The protein resides in the cytosol. Its subcellular location is the nucleus envelope. It is found in the nucleus intermembrane space. The catalysed reaction is (5Z,8Z,11Z,14Z)-eicosatetraenoate + O2 = leukotriene A4 + H2O. The enzyme catalyses 18-HEPE + O2 = (5S)-hydroperoxy-18-hydroxy-(7E,9E,11Z,14Z,16E)-eicosapentaenoate. It catalyses the reaction (18R)-hydroxy-(5Z,8Z,11Z,14Z,16E)-eicosapentaenoate + O2 = (5S)-hydroperoxy-(18R)-hydroxy-(6E,8Z,11Z,14Z,16E)-eicosapentaenoate. It carries out the reaction (18S)-hydroxy-(5Z,8Z,11Z,14Z,16E)-eicosapentaenoate + O2 = (5S)-hydroperoxy-(18S)-hydroxy-(6E,8Z,11Z,14Z,16E)-eicosapentaenoate. The catalysed reaction is (5S)-hydroperoxy-(18S)-hydroxy-(6E,8Z,11Z,14Z,16E)-eicosapentaenoate = (5S,6S)-epoxy-(18S)-hydroxy-(7E,9E,11Z,14Z,16E)-eicosapentaenoate + H2O. The enzyme catalyses (5S)-hydroperoxy-(18R)-hydroxy-(6E,8Z,11Z,14Z,16E)-eicosapentaenoate = (5S,6S)-epoxy-(18R)-hydroxy-(7E,9E,11Z,14Z,16E)-eicosapentaenoate + H2O. It catalyses the reaction (5S)-hydroperoxy-18-hydroxy-(7E,9E,11Z,14Z,16E)-eicosapentaenoate = (5S,6S)-epoxy-18-hydroxy-(7E,9E,11Z,14Z,16E)-eicosapentaenoate + H2O. It carries out the reaction (5Z,8Z,11Z,14Z)-eicosatetraenoate + O2 = (5S)-hydroperoxy-(6E,8Z,11Z,14Z)-eicosatetraenoate. The catalysed reaction is (15S)-hydroxy-(5Z,8Z,11Z,13E)-eicosatetraenoate + O2 = (5S)-hydroperoxy-(15S)-hydroxy-(6E,8Z,11Z,13E)-eicosatetraenoate. The enzyme catalyses (5S)-hydroperoxy-(6E,8Z,11Z,14Z)-eicosatetraenoate = leukotriene A4 + H2O. It catalyses the reaction (5Z,8Z,11Z,14Z)-eicosatetraenoate + O2 = (8S)-hydroperoxy-(5Z,9E,11Z,14Z)-eicosatetraenoate. It carries out the reaction (5Z,8Z,11Z,14Z)-eicosatetraenoate + O2 = (12S)-hydroperoxy-(5Z,8Z,10E,14Z)-eicosatetraenoate. The catalysed reaction is (5Z,8Z)-eicosadienoate + O2 = (5S)-hydroperoxy-(6E,8Z)-eicosadienoate. The enzyme catalyses (12S)-hydroxy-(5Z,8Z,10E,14Z)-eicosatetraenoate + O2 = (5S)-hydroperoxy-(12S)-hydroxy-(6E,8Z,10E,14Z)-eicosatetraenoate. It catalyses the reaction (5Z,8Z,11Z,14Z,17Z)-eicosapentaenoate + O2 = 5-hydroperoxy-(6E,8Z,11Z,14Z,17Z)-eicosapentaenoate. It carries out the reaction (4Z,7Z,10Z,13Z,16Z,19Z)-docosahexaenoate + O2 = (14S)-hydroperoxy-(4Z,7Z,10Z,12E,16Z,19Z)-docosahexaenoate. The catalysed reaction is (4Z,7Z,10Z,13Z,16Z,19Z)-docosahexaenoate + O2 = (7S)-hydroperoxy-(4Z,8E,10Z,13Z,16Z,19Z)-docosahexaenoate. The enzyme catalyses (4Z,7Z,10Z,13Z,16Z,19Z)-docosahexaenoate + O2 = (17S)-hydroperoxy-(4Z,7Z,10Z,13Z,15E,19Z)-docosahexaenoate. The protein operates within lipid metabolism; leukotriene A4 biosynthesis. Undergoes a sequential loss of the oxygenase and pseudoperoxidase activities which is dependent on the structural characteristics of the substrate for the reaction, on oxygen concentration and on exposure to phospholipids and calcium. 15-HETE and other 15-mono-hydroxyeicosanoids exhibit the highest inhibitory potencies in their capability of suppressing 5-lipoxygenation of arachidonic acid, whereas the other HETEs, (5S,15S)-dihydroxy-(6E,8Z,11Z,13E)-eicosatetraenoic acid (5,15-diHETE) as well as octadecanoids, are modest or poor inhibitors. The formation of (5S)-hydroperoxy-(15S)-hydroxy-(6E,8Z,11Z,13E)-eicosatetraenoate is strongly stimulated by either hydroperoxypolyenoic fatty acids or arachidonic acid. Arachidonate 5-lipoxygenase and leukotriene A4 synthase activities are allosterically increased by ATP. Functionally, catalyzes the oxygenation of arachidonate ((5Z,8Z,11Z,14Z)-eicosatetraenoate) to 5-hydroperoxyeicosatetraenoate (5-HPETE) followed by the dehydration to 5,6- epoxyeicosatetraenoate (Leukotriene A4/LTA4), the first two steps in the biosynthesis of leukotrienes, which are potent mediators of inflammation. Also catalyzes the oxygenation of arachidonate into 8-hydroperoxyicosatetraenoate (8-HPETE) and 12-hydroperoxyicosatetraenoate (12-HPETE). Displays lipoxin synthase activity being able to convert (15S)-HETE into a conjugate tetraene. Although arachidonate is the preferred substrate, this enzyme can also metabolize oxidized fatty acids derived from arachidonate such as (15S)-HETE, eicosapentaenoate (EPA) such as (18R)- and (18S)-HEPE or docosahexaenoate (DHA) which lead to the formation of specialized pro-resolving mediators (SPM) lipoxin and resolvins E and D respectively, therefore it participates in anti-inflammatory responses. Oxidation of DHA directly inhibits endothelial cell proliferation and sprouting angiogenesis via peroxisome proliferator-activated receptor gamma (PPARgamma). It does not catalyze the oxygenation of linoleic acid and does not convert (5S)-HETE to lipoxin isomers. In addition to inflammatory processes, it participates in dendritic cell migration, wound healing through an antioxidant mechanism based on heme oxygenase-1 (HO-1) regulation expression, monocyte adhesion to the endothelium via ITGAM expression on monocytes. Moreover, it helps establish an adaptive humoral immunity by regulating primary resting B cells and follicular helper T cells and participates in the CD40-induced production of reactive oxygen species (ROS) after CD40 ligation in B cells through interaction with PIK3R1 that bridges ALOX5 with CD40. May also play a role in glucose homeostasis, regulation of insulin secretion and palmitic acid-induced insulin resistance via AMPK. Can regulate bone mineralization and fat cell differentiation increases in induced pluripotent stem cells. The protein is Polyunsaturated fatty acid 5-lipoxygenase of Homo sapiens (Human).